A 520-amino-acid chain; its full sequence is Bifunctional purine biosynthesis protein PurH (520 aa).

The MGS-like domain maps to 1–146 (MAPVALLSVS…KNHADVAVLT (146 aa)).

This sequence belongs to the PurH family.

The enzyme catalyses (6R)-10-formyltetrahydrofolate + 5-amino-1-(5-phospho-beta-D-ribosyl)imidazole-4-carboxamide = 5-formamido-1-(5-phospho-D-ribosyl)imidazole-4-carboxamide + (6S)-5,6,7,8-tetrahydrofolate. It catalyses the reaction IMP + H2O = 5-formamido-1-(5-phospho-D-ribosyl)imidazole-4-carboxamide. It participates in purine metabolism; IMP biosynthesis via de novo pathway; 5-formamido-1-(5-phospho-D-ribosyl)imidazole-4-carboxamide from 5-amino-1-(5-phospho-D-ribosyl)imidazole-4-carboxamide (10-formyl THF route): step 1/1. Its pathway is purine metabolism; IMP biosynthesis via de novo pathway; IMP from 5-formamido-1-(5-phospho-D-ribosyl)imidazole-4-carboxamide: step 1/1. The polypeptide is Bifunctional purine biosynthesis protein PurH (Synechococcus sp. (strain CC9605)).